The sequence spans 240 residues: MAGHSKWANIKHKKAAQDAKRGKIFTRLIKEITVAARLGGGDPNSNPRLRLAVDKAYEQNMPKENVERAIKRGSGDLEGVNYEEIRYEGYGIAGAAVLVDCMTDNRVRTVADVRHAFTKYGGNLGTDGSVGFLFKHCGQLLFAPGTDEDKLMEVALEAGAEDIIAHDDGSIEVITAPYEFVAVKEALEKAGFKAELAEVTMKPVNETELTGDDSVKMQKLLDALESIDDVQEVYTTAVID.

The protein belongs to the TACO1 family.

The protein localises to the cytoplasm. This is Probable transcriptional regulatory protein Nmul_A2722 from Nitrosospira multiformis (strain ATCC 25196 / NCIMB 11849 / C 71).